A 234-amino-acid polypeptide reads, in one-letter code: Proteasome subunit alpha (234 aa).

The protein belongs to the peptidase T1A family. As to quaternary structure, the 20S proteasome core is composed of 14 alpha and 14 beta subunits that assemble into four stacked heptameric rings, resulting in a barrel-shaped structure. The two inner rings, each composed of seven catalytic beta subunits, are sandwiched by two outer rings, each composed of seven alpha subunits. The catalytic chamber with the active sites is on the inside of the barrel. Has a gated structure, the ends of the cylinder being occluded by the N-termini of the alpha-subunits. Is capped at one or both ends by the proteasome regulatory ATPase, PAN.

The protein resides in the cytoplasm. With respect to regulation, the formation of the proteasomal ATPase PAN-20S proteasome complex, via the docking of the C-termini of PAN into the intersubunit pockets in the alpha-rings, triggers opening of the gate for substrate entry. Interconversion between the open-gate and close-gate conformations leads to a dynamic regulation of the 20S proteasome proteolysis activity. Functionally, component of the proteasome core, a large protease complex with broad specificity involved in protein degradation. In Picrophilus torridus (strain ATCC 700027 / DSM 9790 / JCM 10055 / NBRC 100828 / KAW 2/3), this protein is Proteasome subunit alpha.